Consider the following 664-residue polypeptide: Lamin tail domain-containing protein 2 (664 aa).

The disordered stretch occupies residues 1 to 40 (MAPKSCQESEDKQVSPAPAGVQPDSSDLGSPVGTPVDRVA). Residues 118–169 (QDKFLRNQVQKLTLELKAQKEQAQQEKQQLEEKLQQNLWAKQQLEAELQTFQ) are a coiled coil. Residues 245-260 (SDQKQSQPPTSETYTL) show a composition bias toward polar residues. 2 disordered regions span residues 245-272 (SDQK…TEKP) and 286-329 (TSSS…MQEH). Low complexity predominate over residues 286 to 298 (TSSSERTQSDTSS). Polar residues predominate over residues 312 to 325 (GHPSQGTNLASSEQ). Positions 362 to 481 (PYTRPQLNPF…QVLSEHQATP (120 aa)) constitute an LTD domain. A disordered region spans residues 504–563 (SESEPDVHPGEQQCRPSSPQKGRAKDAGARRKKPGPGVRQHRHSSTSGLRASRTLHPTET). Positions 533–547 (RRKKPGPGVRQHRHS) are enriched in basic residues.

The sequence is that of Lamin tail domain-containing protein 2 (Lmntd2) from Mus musculus (Mouse).